Here is a 139-residue protein sequence, read N- to C-terminus: Cystatin cpi-1 (139 aa).

Residues 1–19 (MRFILLIALVFAVLDGINC) form the signal peptide. A glycan (N-linked (GlcNAc...) asparagine) is linked at Asn-29. The short motif at 65–69 (QVVAG) is the Secondary area of contact element. Cysteines 83 and 99 form a disulfide.

This sequence belongs to the cystatin family.

In terms of biological role, cysteine protease inhibitor which inhibits members of the peptidase C1 family. Does not inhibit asparaginyl endopeptidase. May play a protective role against exogenous cysteine proteases derived from soil bacteria or fungi, or rotting fruits and vegetation. The sequence is that of Cystatin cpi-1 from Caenorhabditis elegans.